The primary structure comprises 179 residues: Caveolin-1 (179 aa).

S2 carries the N-acetylserine modification. At S2 the chain carries Phosphoserine. The tract at residues 2–95 (SGGKYVDSEG…WKASFTTFTV (94 aa)) is required for homooligomerization. Topologically, residues 2–105 (SGGKYVDSEG…TKYWFYRLLS (104 aa)) are cytoplasmic. At K5 the chain carries N6-acetyllysine; alternate. Residue K5 forms a Glycyl lysine isopeptide (Lys-Gly) (interchain with G-Cter in ubiquitin); alternate linkage. Y6 is subject to Phosphotyrosine. S9 carries the phosphoserine modification. Y14 bears the Phosphotyrosine; by ABL1 mark. A Phosphotyrosine modification is found at Y25. Glycyl lysine isopeptide (Lys-Gly) (interchain with G-Cter in ubiquitin) cross-links involve residues K26 and K30. A Phosphoserine modification is found at S37. Glycyl lysine isopeptide (Lys-Gly) (interchain with G-Cter in ubiquitin) cross-links involve residues K39, K48, and K58. Residues 83-95 (DGIWKASFTTFTV) form an interaction with CAVIN3 region. Residues 106–126 (ALFGIPMALIWGIYFAILSFL) constitute an intramembrane region (helical). Over 127 to 179 (HIWAVVPCIKSFLIEIQCISRVYSIYVHTFCDPLFEAIGKVFSNIRINMQKEI) the chain is Cytoplasmic. Residues 132 to 143 (VPCIKSFLIEIQ) form an interacts with SPRY1, SPRY2, SPRY3 and SPRY4 region. Residues C134, C144, and C157 are each lipidated (S-palmitoyl cysteine). Residues 150–161 (SIYVHTFCDPLF) are interacts with SPRY1, SPRY2, and SPRY4. The segment at 168–179 (FSNIRINMQKEI) is interacts with SPRY1, SPRY2, SPRY3 and SPRY4.

This sequence belongs to the caveolin family. In terms of assembly, homooligomer. Interacts with GLIPR2. Interacts with NOSTRIN. Interacts with SNAP25 and STX1A. Interacts (via the N-terminus) with DPP4; the interaction is direct. Interacts with CTNNB1, CDH1 and JUP. Interacts with PACSIN2; this interaction induces membrane tubulation. Interacts with SLC7A9. Interacts with BMX and BTK. Interacts with TGFBR1. Interacts with CAVIN3 (via leucine-zipper domain) in a cholesterol-sensitive manner. Interacts with CAVIN1. Interacts with EHD2 in a cholesterol-dependent manner. Forms a ternary complex with UBXN6 and VCP; mediates CAV1 targeting to lysosomes for degradation. Interacts with ABCG1; this interaction regulates ABCG1-mediated cholesterol efflux. Interacts with NEU3; this interaction enhances NEU3 sialidase activity within caveola. Interacts (via C-terminus) with SPRY1, SPRY2 (via C-terminus), SPRY3, and SPRY4. Interacts with IGFBP5; this interaction allows trafficking of IGFBP5 from the plasma membrane to the nucleus. Phosphorylated at Tyr-14 by ABL1 in response to oxidative stress. In terms of processing, ubiquitinated. Undergo monoubiquitination and multi- and/or polyubiquitination. Monoubiquitination of N-terminal lysines promotes integration in a ternary complex with UBXN6 and VCP which promotes oligomeric CAV1 targeting to lysosomes for degradation. Ubiquitinated by ZNRF1; leading to degradation and modulation of the TLR4-mediated immune response.

It is found in the golgi apparatus membrane. The protein resides in the cell membrane. It localises to the membrane. The protein localises to the caveola. Its subcellular location is the membrane raft. Its function is as follows. May act as a scaffolding protein within caveolar membranes. Forms a stable heterooligomeric complex with CAV2 that targets to lipid rafts and drives caveolae formation. Mediates the recruitment of CAVIN proteins (CAVIN1/2/3/4) to the caveolae. Interacts directly with G-protein alpha subunits and can functionally regulate their activity. Involved in the costimulatory signal essential for T-cell receptor (TCR)-mediated T-cell activation. Its binding to DPP4 induces T-cell proliferation and NF-kappa-B activation in a T-cell receptor/CD3-dependent manner. Recruits CTNNB1 to caveolar membranes and may regulate CTNNB1-mediated signaling through the Wnt pathway. Negatively regulates TGFB1-mediated activation of SMAD2/3 by mediating the internalization of TGFBR1 from membrane rafts leading to its subsequent degradation. Binds 20(S)-hydroxycholesterol (20(S)-OHC). The chain is Caveolin-1 (CAV1) from Eulemur macaco macaco (Black lemur).